The chain runs to 298 residues: HTH-type transcriptional regulator ArgP (298 aa).

One can recognise an HTH lysR-type domain in the interval 4–60 (VDYRWVAALDAVIAQRGFERAAEKLCITQSAVSQRIKQLEKLMAQPLLVREQPPRPT). The segment at residues 21–40 (FERAAEKLCITQSAVSQRIK) is a DNA-binding region (H-T-H motif).

Belongs to the LysR transcriptional regulatory family. In terms of assembly, homodimer.

Its function is as follows. Controls the transcription of genes involved in arginine and lysine metabolism. This is HTH-type transcriptional regulator ArgP from Photobacterium profundum (strain SS9).